The sequence spans 178 residues: ATP-dependent protease subunit HslV (178 aa).

The active site involves Thr7. 3 residues coordinate Na(+): Gly162, Cys165, and Thr168.

It belongs to the peptidase T1B family. HslV subfamily. A double ring-shaped homohexamer of HslV is capped on each side by a ring-shaped HslU homohexamer. The assembly of the HslU/HslV complex is dependent on binding of ATP.

The protein localises to the cytoplasm. The catalysed reaction is ATP-dependent cleavage of peptide bonds with broad specificity.. With respect to regulation, allosterically activated by HslU binding. Protease subunit of a proteasome-like degradation complex believed to be a general protein degrading machinery. In Cupriavidus pinatubonensis (strain JMP 134 / LMG 1197) (Cupriavidus necator (strain JMP 134)), this protein is ATP-dependent protease subunit HslV.